The following is a 132-amino-acid chain: Aspartate 1-decarboxylase (132 aa).

The active-site Schiff-base intermediate with substrate; via pyruvic acid is S25. S25 carries the post-translational modification Pyruvic acid (Ser). T57 provides a ligand contact to substrate. Residue Y58 is the Proton donor of the active site. Position 73–75 (73–75 (GAA)) interacts with substrate.

It belongs to the PanD family. Heterooctamer of four alpha and four beta subunits. It depends on pyruvate as a cofactor. Post-translationally, is synthesized initially as an inactive proenzyme, which is activated by self-cleavage at a specific serine bond to produce a beta-subunit with a hydroxyl group at its C-terminus and an alpha-subunit with a pyruvoyl group at its N-terminus.

It localises to the cytoplasm. It catalyses the reaction L-aspartate + H(+) = beta-alanine + CO2. Its pathway is cofactor biosynthesis; (R)-pantothenate biosynthesis; beta-alanine from L-aspartate: step 1/1. Functionally, catalyzes the pyruvoyl-dependent decarboxylation of aspartate to produce beta-alanine. The sequence is that of Aspartate 1-decarboxylase from Heliobacterium modesticaldum (strain ATCC 51547 / Ice1).